A 180-amino-acid polypeptide reads, in one-letter code: ATP synthase subunit b 2 (180 aa).

A helical transmembrane segment spans residues 33-53 (IFWLLVTLVAIYFLLTRVALP).

Belongs to the ATPase B chain family. F-type ATPases have 2 components, F(1) - the catalytic core - and F(0) - the membrane proton channel. F(1) has five subunits: alpha(3), beta(3), gamma(1), delta(1), epsilon(1). F(0) has three main subunits: a(1), b(2) and c(10-14). The alpha and beta chains form an alternating ring which encloses part of the gamma chain. F(1) is attached to F(0) by a central stalk formed by the gamma and epsilon chains, while a peripheral stalk is formed by the delta and b chains.

The protein localises to the cell inner membrane. Functionally, f(1)F(0) ATP synthase produces ATP from ADP in the presence of a proton or sodium gradient. F-type ATPases consist of two structural domains, F(1) containing the extramembraneous catalytic core and F(0) containing the membrane proton channel, linked together by a central stalk and a peripheral stalk. During catalysis, ATP synthesis in the catalytic domain of F(1) is coupled via a rotary mechanism of the central stalk subunits to proton translocation. Its function is as follows. Component of the F(0) channel, it forms part of the peripheral stalk, linking F(1) to F(0). The b'-subunit is a diverged and duplicated form of b found in plants and photosynthetic bacteria. This Cereibacter sphaeroides (strain ATCC 17029 / ATH 2.4.9) (Rhodobacter sphaeroides) protein is ATP synthase subunit b 2 (atpF2).